The following is a 90-amino-acid chain: HssA/B-like protein 4 (90 aa).

The protein belongs to the hssA/B family.

This is HssA/B-like protein 4 (hssl4) from Dictyostelium discoideum (Social amoeba).